Consider the following 129-residue polypeptide: Transcriptional activator protein (129 aa).

A disordered region spans residues 1–20; sequence MRSSSPSQPPSIKRAHRQAK. Residues 13-28 carry the Nuclear localization signal motif; sequence KRAHRQAKKRAIRRRR. Residues 33 to 50 fold into a zinc finger; the sequence is CGCSIYFHLGCAGHGFTH. Residues 73–118 are disordered; it reads LFQDTQSRGPTVYQNEGIPRTDTVQPQPEESVASPQSLPELPSLDD. 2 stretches are compositionally biased toward polar residues: residues 74–86 and 94–109; these read FQDT…TVYQ and DTVQ…SPQS. At Ser-109 the chain carries Phosphoserine; by host. The transactivation stretch occupies residues 115 to 129; it reads SLDDVDDSFWINLFS.

Belongs to the geminiviridae transcriptional activator protein family. In terms of assembly, monomer. Homodimer. Homooligomer. Self-interaction correlates with nuclear localization and efficient activation of transcription. Monomers suppress local silencing by interacting with and inactivating host adenosine kinase 2 (ADK2) in the cytoplasm. Interacts with and inhibits host SNF1 kinase. In terms of processing, phosphorylated at Ser-109 by A.thaliana KIN10.

It is found in the host nucleus. The protein localises to the host cytoplasm. Strong activator of the late viral genes promoters. Enhances the expression of the capsid protein and nuclear shuttle protein. Acts as a suppressor of RNA-mediated gene silencing, also known as post-transcriptional gene silencing (PTGS), a mechanism of plant viral defense that limits the accumulation of viral RNAs. Suppresses the host RNA silencing by inhibiting adenosine kinase 2 (ADK2), a kinase involved in a general methylation pathway. Also suppresses the host basal defense by interacting with and inhibiting SNF1 kinase, a key regulator of cell metabolism implicated in innate antiviral defense. Determines pathogenicity. In Nicotiana tabacum (Common tobacco), this protein is Transcriptional activator protein.